A 751-amino-acid chain; its full sequence is Phosphoribosylformylglycinamidine synthase subunit PurL (751 aa).

The active site involves histidine 54. ATP-binding residues include tyrosine 57 and lysine 106. Residue glutamate 108 coordinates Mg(2+). Substrate is bound by residues 109-112 (SHNH) and arginine 131. Residue histidine 110 is the Proton acceptor of the active site. Aspartate 132 serves as a coordination point for Mg(2+). Glutamine 256 serves as a coordination point for substrate. Aspartate 284 contributes to the Mg(2+) binding site. 328-330 (ESQ) is a binding site for substrate. ATP is bound by residues aspartate 516 and glycine 553. Asparagine 554 provides a ligand contact to Mg(2+). Serine 556 serves as a coordination point for substrate.

Belongs to the FGAMS family. Monomer. Part of the FGAM synthase complex composed of 1 PurL, 1 PurQ and 2 PurS subunits.

It is found in the cytoplasm. It catalyses the reaction N(2)-formyl-N(1)-(5-phospho-beta-D-ribosyl)glycinamide + L-glutamine + ATP + H2O = 2-formamido-N(1)-(5-O-phospho-beta-D-ribosyl)acetamidine + L-glutamate + ADP + phosphate + H(+). It functions in the pathway purine metabolism; IMP biosynthesis via de novo pathway; 5-amino-1-(5-phospho-D-ribosyl)imidazole from N(2)-formyl-N(1)-(5-phospho-D-ribosyl)glycinamide: step 1/2. Functionally, part of the phosphoribosylformylglycinamidine synthase complex involved in the purines biosynthetic pathway. Catalyzes the ATP-dependent conversion of formylglycinamide ribonucleotide (FGAR) and glutamine to yield formylglycinamidine ribonucleotide (FGAM) and glutamate. The FGAM synthase complex is composed of three subunits. PurQ produces an ammonia molecule by converting glutamine to glutamate. PurL transfers the ammonia molecule to FGAR to form FGAM in an ATP-dependent manner. PurS interacts with PurQ and PurL and is thought to assist in the transfer of the ammonia molecule from PurQ to PurL. This is Phosphoribosylformylglycinamidine synthase subunit PurL from Nocardioides sp. (strain ATCC BAA-499 / JS614).